Consider the following 241-residue polypeptide: Small ribosomal subunit protein uS2 (241 aa).

This sequence belongs to the universal ribosomal protein uS2 family.

This Pectobacterium atrosepticum (strain SCRI 1043 / ATCC BAA-672) (Erwinia carotovora subsp. atroseptica) protein is Small ribosomal subunit protein uS2.